We begin with the raw amino-acid sequence, 276 residues long: Putative pyruvate, phosphate dikinase regulatory protein 1 (276 aa).

Residue 157-164 (GVSRTSKT) participates in ADP binding.

Belongs to the pyruvate, phosphate/water dikinase regulatory protein family. PDRP subfamily.

It carries out the reaction N(tele)-phospho-L-histidyl/L-threonyl-[pyruvate, phosphate dikinase] + ADP = N(tele)-phospho-L-histidyl/O-phospho-L-threonyl-[pyruvate, phosphate dikinase] + AMP + H(+). The enzyme catalyses N(tele)-phospho-L-histidyl/O-phospho-L-threonyl-[pyruvate, phosphate dikinase] + phosphate + H(+) = N(tele)-phospho-L-histidyl/L-threonyl-[pyruvate, phosphate dikinase] + diphosphate. Functionally, bifunctional serine/threonine kinase and phosphorylase involved in the regulation of the pyruvate, phosphate dikinase (PPDK) by catalyzing its phosphorylation/dephosphorylation. This Staphylococcus haemolyticus (strain JCSC1435) protein is Putative pyruvate, phosphate dikinase regulatory protein 1.